The chain runs to 353 residues: GDSL esterase/lipase APG (353 aa).

A signal peptide spans 1-25 (MDRCTSSFLLLTLVSTLSILQISFA). Catalysis depends on Ser-37, which acts as the Nucleophile. N-linked (GlcNAc...) asparagine glycosylation is found at Asn-197 and Asn-320. Catalysis depends on residues Asp-328 and His-331.

It belongs to the 'GDSL' lipolytic enzyme family.

Its subcellular location is the secreted. The protein is GDSL esterase/lipase APG (APG) of Arabidopsis thaliana (Mouse-ear cress).